The primary structure comprises 253 residues: 5'-nucleotidase SurE (253 aa).

4 residues coordinate a divalent metal cation: Asp-8, Asp-9, Ser-39, and Asn-96.

Belongs to the SurE nucleotidase family. A divalent metal cation serves as cofactor.

Its subcellular location is the cytoplasm. The catalysed reaction is a ribonucleoside 5'-phosphate + H2O = a ribonucleoside + phosphate. Its function is as follows. Nucleotidase that shows phosphatase activity on nucleoside 5'-monophosphates. The chain is 5'-nucleotidase SurE from Rhodopirellula baltica (strain DSM 10527 / NCIMB 13988 / SH1).